A 291-amino-acid polypeptide reads, in one-letter code: N-acetylmannosamine kinase (291 aa).

ATP-binding positions include 5 to 12 (AIDIGGTK) and 132 to 139 (GVGGGVVC). Residues His-156, Cys-166, Cys-168, and Cys-173 each coordinate Zn(2+).

The protein belongs to the ROK (NagC/XylR) family. NanK subfamily. As to quaternary structure, homodimer.

The catalysed reaction is an N-acyl-D-mannosamine + ATP = an N-acyl-D-mannosamine 6-phosphate + ADP + H(+). Its pathway is amino-sugar metabolism; N-acetylneuraminate degradation; D-fructose 6-phosphate from N-acetylneuraminate: step 2/5. Its function is as follows. Catalyzes the phosphorylation of N-acetylmannosamine (ManNAc) to ManNAc-6-P. In Salmonella agona (strain SL483), this protein is N-acetylmannosamine kinase.